Here is a 376-residue protein sequence, read N- to C-terminus: tRNA-specific 2-thiouridylase MnmA (376 aa).

ATP contacts are provided by residues glycine 17–serine 24 and methionine 43. The interval asparagine 103 to aspartate 105 is interaction with target base in tRNA. Cysteine 108 functions as the Nucleophile in the catalytic mechanism. Cysteine 108 and cysteine 204 are oxidised to a cystine. Glycine 132 lines the ATP pocket. Residues lysine 154–glutamine 156 form an interaction with tRNA region. Cysteine 204 functions as the Cysteine persulfide intermediate in the catalytic mechanism. Residues arginine 316–tyrosine 317 are interaction with tRNA.

Belongs to the MnmA/TRMU family.

Its subcellular location is the cytoplasm. The enzyme catalyses S-sulfanyl-L-cysteinyl-[protein] + uridine(34) in tRNA + AH2 + ATP = 2-thiouridine(34) in tRNA + L-cysteinyl-[protein] + A + AMP + diphosphate + H(+). Its function is as follows. Catalyzes the 2-thiolation of uridine at the wobble position (U34) of tRNA, leading to the formation of s(2)U34. The sequence is that of tRNA-specific 2-thiouridylase MnmA from Pseudomonas syringae pv. syringae (strain B728a).